A 360-amino-acid chain; its full sequence is MKLVFRWYGEKHDTVTLEQIRQIPGVEGVVGALFDIPVGEVWPFEEIMKLKETVEKAGLKLEVIESVNVHEDIKLGLPTRDRYIENYKKTIRNLAKAGVKVVCYNFMPVFDWMRTDLHKKLPDGSETMEYDHRLIEGVTPDELIKRVKEGSQGFVLPGWEWDRLEKLRETFELYKNVDEEKLFENLVYFLERVIPVCEECDVKLAIHPDDPPWSIFGLPRIITNKENIERMLKAVDSPYNGITFCMGSLGANPENNIPEMIRYFGKMGRIHFAHVRNLKFTGEKSFYETAHPSFCGSHDLFEVMKAFHDIGYEGYIRPDHGRLIWGEKARPGYGLYDRALGATYILGLWEAIDKMKKRYC.

Belongs to the mannonate dehydratase family. Fe(2+) serves as cofactor. Requires Mn(2+) as cofactor.

The catalysed reaction is D-mannonate = 2-dehydro-3-deoxy-D-gluconate + H2O. It functions in the pathway carbohydrate metabolism; pentose and glucuronate interconversion. Functionally, catalyzes the dehydration of D-mannonate. This is Mannonate dehydratase (uxuA) from Thermotoga maritima (strain ATCC 43589 / DSM 3109 / JCM 10099 / NBRC 100826 / MSB8).